A 474-amino-acid chain; its full sequence is Chromosomal replication initiator protein DnaA (474 aa).

The segment at 1-91 is domain I, interacts with DnaA modulators; the sequence is MSEELWQRCL…STRASTPAAS (91 aa). The tract at residues 89–138 is disordered; sequence AASYFNGSSSSSSNGPITTPAAAPAPRQPESDSRPQPTSLGGARKHRSNL. Positions 91-136 are domain II; the sequence is SYFNGSSSSSSNGPITTPAAAPAPRQPESDSRPQPTSLGGARKHRS. Positions 96–113 are enriched in low complexity; it reads SSSSSSNGPITTPAAAPA. The domain III, AAA+ region stretch occupies residues 137–354; that stretch reads NLNTGFTFST…GALRRVIAHV (218 aa). Gly182, Gly184, Lys185, and Thr186 together coordinate ATP. The interval 355-474 is domain IV, binds dsDNA; it reads RFTGAQIDIG…YLNLLRTLTS (120 aa).

Belongs to the DnaA family. Oligomerizes as a right-handed, spiral filament on DNA at oriC.

The protein resides in the cytoplasm. Plays an essential role in the initiation and regulation of chromosomal replication. ATP-DnaA binds to the origin of replication (oriC) to initiate formation of the DNA replication initiation complex once per cell cycle. Binds the DnaA box (a 9 base pair repeat at the origin) and separates the double-stranded (ds)DNA. Forms a right-handed helical filament on oriC DNA; dsDNA binds to the exterior of the filament while single-stranded (ss)DNA is stabiized in the filament's interior. The ATP-DnaA-oriC complex binds and stabilizes one strand of the AT-rich DNA unwinding element (DUE), permitting loading of DNA polymerase. After initiation quickly degrades to an ADP-DnaA complex that is not apt for DNA replication. Binds acidic phospholipids. The protein is Chromosomal replication initiator protein DnaA of Alcanivorax borkumensis (strain ATCC 700651 / DSM 11573 / NCIMB 13689 / SK2).